A 613-amino-acid chain; its full sequence is Leucine-rich repeat receptor-like protein FASCIATED EAR2 (613 aa).

Residues 1-28 (MLTATPLPHQLLATFLLVLASATQPAVP) form the signal peptide. Over 29 to 573 (ASTDRAALLA…WLGGWHGENG (545 aa)) the chain is Extracellular. 17 LRR repeats span residues 79–103 (TPSV…PLAL), 104–128 (LRRL…LPRS), 130–150 (LALD…LPSS), 151–176 (LPAL…SFPA), 178–199 (LAAL…IVAD), 202–226 (NSAL…IAAV), 227–250 (RSLQ…IGNL), 251–274 (TYLQ…LAGC), 276–297 (QLLY…ELDA), 298–322 (LASL…LAGC), 324–346 (SLEV…VAKW), 347–370 (LSLK…MFSF), 372–394 (LLQW…GFNV), 435–459 (VQAT…LVDM), 460–483 (KGLE…LGGM), 484–507 (GRLH…IAAM), and 508–531 (TVLE…KFPG). The N-linked (GlcNAc...) asparagine glycan is linked to N91. The N-linked (GlcNAc...) asparagine glycan is linked to N158. Residue N249 is glycosylated (N-linked (GlcNAc...) asparagine). An N-linked (GlcNAc...) asparagine glycan is attached at N393. N466 carries an N-linked (GlcNAc...) asparagine glycan. N-linked (GlcNAc...) asparagine glycosylation is present at N514. A helical transmembrane segment spans residues 574-597 (WVSLGAFCISTMTSFYVSLATLLC). The Cytoplasmic segment spans residues 598–613 (SSNARNFVFRPVRVEY).

In terms of tissue distribution, expressed in ear primordia, vegetative apex and young leaf tissues. Barely detected in expanded leaf tissues and not expressed in roots.

It localises to the cell membrane. Functionally, receptor-like protein that regulates shoot meristem proliferation. Based on additive and synergistic phenotypes of double mutants, it is probable that unlike CLV1 and CLV2 in A.thaliana, FAE2 and TD1 do not function exclusively in a single pathway. The protein is Leucine-rich repeat receptor-like protein FASCIATED EAR2 (FEA2) of Zea mays (Maize).